The following is a 594-amino-acid chain: Suppressor of hairless protein (594 aa).

The disordered stretch occupies residues 20 to 87 (ETTVVNPNGS…QQQQQHQQQM (68 aa)). Low complexity predominate over residues 58 to 87 (QQQQQQLQVHHQQQQQQQQQQQQQQHQQQM). DNA-binding regions lie at residues 131–141 (QKSYGNEKRFF), 239–244 (SKPSKK), and 266–271 (RLRSQT). Residues 429–519 (PIVNSLNLNG…YATGLTFTYT (91 aa)) form the IPT/TIG domain. Composition is skewed to low complexity over residues 542 to 562 (NNNN…AGSP) and 569 to 580 (QQQQQQHQALPS). The disordered stretch occupies residues 542 to 594 (NNNNNITSISNNNNSNNAGSPAAGGGLQQQQQQHQALPSISEVQWNSHGSGLS). Residues 582–594 (SEVQWNSHGSGLS) show a composition bias toward polar residues.

This sequence belongs to the Su(H) family. Interacts with activated cleaved Notch. Interacts with Hairless, this interaction preventing its DNA-binding activity. Interacts with insv (via BEN domain).

It is found in the nucleus. The protein localises to the cytoplasm. Transcriptional regulator that plays a central role in Notch signaling, a signaling pathway involved in cell-cell communication that regulates a broad spectrum of cell-fate determinations. Binds directly the 5'-GTGRGAR-3' DNA consensus sequence, which is present in the regulatory region of several genes. Acts as a transcriptional repressor when it is not associated with Notch proteins. When associated with some Notch protein, it acts as a transcriptional activator that activates transcription of Notch target genes. Required for transcription of Sim. Specifically binds to the immunoglobulin kappa-type J segment recombination signal sequence. Required for neurogenesis in imaginal disks. In the larval brain, might play a role as a transducer of Notch signaling during type II neuroblast development. Also functions independently of the Notch pathway, in the development of the bristle sensory organ precursor cell. This is Suppressor of hairless protein (Su(H)) from Drosophila melanogaster (Fruit fly).